We begin with the raw amino-acid sequence, 526 residues long: GMP synthase [glutamine-hydrolyzing] (526 aa).

A Glutamine amidotransferase type-1 domain is found at 9 to 207; it reads RILILNFGSQ…VLDICSCQGR (199 aa). Residue C86 is the Nucleophile of the active site. Residues H181 and E183 contribute to the active site. The region spanning 208–401 is the GMPS ATP-PPase domain; that stretch reads WTPNNIKENI…LGLPFHMLYR (194 aa). 235–241 is an ATP binding site; it reads SGGVDST.

As to quaternary structure, homodimer.

It carries out the reaction XMP + L-glutamine + ATP + H2O = GMP + L-glutamate + AMP + diphosphate + 2 H(+). Its pathway is purine metabolism; GMP biosynthesis; GMP from XMP (L-Gln route): step 1/1. Its function is as follows. Catalyzes the synthesis of GMP from XMP. This is GMP synthase [glutamine-hydrolyzing] from Baumannia cicadellinicola subsp. Homalodisca coagulata.